Reading from the N-terminus, the 335-residue chain is Holliday junction branch migration complex subunit RuvB (335 aa).

Residues 1–183 (MDERIISSET…FGVIDHLEFY (183 aa)) are large ATPase domain (RuvB-L). ATP contacts are provided by residues leucine 22, arginine 23, glycine 64, lysine 67, threonine 68, threonine 69, 130–132 (EDY), arginine 173, tyrosine 183, and arginine 220. Residue threonine 68 coordinates Mg(2+). A small ATPAse domain (RuvB-S) region spans residues 184 to 254 (TEEQLTEIVL…LAKEALTLLQ (71 aa)). Residues 257 to 335 (PRGLDTIDQK…HLGISYEKEV (79 aa)) are head domain (RuvB-H). DNA is bound by residues arginine 293, arginine 312, and arginine 317.

This sequence belongs to the RuvB family. In terms of assembly, homohexamer. Forms an RuvA(8)-RuvB(12)-Holliday junction (HJ) complex. HJ DNA is sandwiched between 2 RuvA tetramers; dsDNA enters through RuvA and exits via RuvB. An RuvB hexamer assembles on each DNA strand where it exits the tetramer. Each RuvB hexamer is contacted by two RuvA subunits (via domain III) on 2 adjacent RuvB subunits; this complex drives branch migration. In the full resolvosome a probable DNA-RuvA(4)-RuvB(12)-RuvC(2) complex forms which resolves the HJ.

It is found in the cytoplasm. The catalysed reaction is ATP + H2O = ADP + phosphate + H(+). The RuvA-RuvB-RuvC complex processes Holliday junction (HJ) DNA during genetic recombination and DNA repair, while the RuvA-RuvB complex plays an important role in the rescue of blocked DNA replication forks via replication fork reversal (RFR). RuvA specifically binds to HJ cruciform DNA, conferring on it an open structure. The RuvB hexamer acts as an ATP-dependent pump, pulling dsDNA into and through the RuvAB complex. RuvB forms 2 homohexamers on either side of HJ DNA bound by 1 or 2 RuvA tetramers; 4 subunits per hexamer contact DNA at a time. Coordinated motions by a converter formed by DNA-disengaged RuvB subunits stimulates ATP hydrolysis and nucleotide exchange. Immobilization of the converter enables RuvB to convert the ATP-contained energy into a lever motion, pulling 2 nucleotides of DNA out of the RuvA tetramer per ATP hydrolyzed, thus driving DNA branch migration. The RuvB motors rotate together with the DNA substrate, which together with the progressing nucleotide cycle form the mechanistic basis for DNA recombination by continuous HJ branch migration. Branch migration allows RuvC to scan DNA until it finds its consensus sequence, where it cleaves and resolves cruciform DNA. In Listeria innocua serovar 6a (strain ATCC BAA-680 / CLIP 11262), this protein is Holliday junction branch migration complex subunit RuvB.